Reading from the N-terminus, the 447-residue chain is N-succinylarginine dihydrolase (447 aa).

Residues Ala19–Ser28, Asn110, and His137–Arg138 contribute to the substrate site. Glu174 is an active-site residue. Arg213 provides a ligand contact to substrate. The active site involves His249. 2 residues coordinate substrate: Asp251 and Asn365. Cys371 serves as the catalytic Nucleophile.

Belongs to the succinylarginine dihydrolase family. As to quaternary structure, homodimer.

It carries out the reaction N(2)-succinyl-L-arginine + 2 H2O + 2 H(+) = N(2)-succinyl-L-ornithine + 2 NH4(+) + CO2. It functions in the pathway amino-acid degradation; L-arginine degradation via AST pathway; L-glutamate and succinate from L-arginine: step 2/5. In terms of biological role, catalyzes the hydrolysis of N(2)-succinylarginine into N(2)-succinylornithine, ammonia and CO(2). The protein is N-succinylarginine dihydrolase of Photorhabdus laumondii subsp. laumondii (strain DSM 15139 / CIP 105565 / TT01) (Photorhabdus luminescens subsp. laumondii).